The sequence spans 204 residues: tRNA (pseudouridine(54)-N(1))-methyltransferase (204 aa).

Residues Leu130, Gly157, 180-185, and Cys190 each bind S-adenosyl-L-methionine; that span reads LSPLEL.

Belongs to the methyltransferase superfamily. TrmY family. Homodimer.

It is found in the cytoplasm. It catalyses the reaction pseudouridine(54) in tRNA + S-adenosyl-L-methionine = N(1)-methylpseudouridine(54) in tRNA + S-adenosyl-L-homocysteine + H(+). Its function is as follows. Specifically catalyzes the N1-methylation of pseudouridine at position 54 (Psi54) in tRNAs. In Methanococcus aeolicus (strain ATCC BAA-1280 / DSM 17508 / OCM 812 / Nankai-3), this protein is tRNA (pseudouridine(54)-N(1))-methyltransferase.